The following is a 504-amino-acid chain: Lysine--tRNA ligase (504 aa).

Residues E404 and E411 each coordinate Mg(2+).

The protein belongs to the class-II aminoacyl-tRNA synthetase family. In terms of assembly, homodimer. Mg(2+) serves as cofactor.

It is found in the cytoplasm. It catalyses the reaction tRNA(Lys) + L-lysine + ATP = L-lysyl-tRNA(Lys) + AMP + diphosphate. This Aliarcobacter butzleri (strain RM4018) (Arcobacter butzleri) protein is Lysine--tRNA ligase.